The following is a 483-amino-acid chain: Glycogen synthase (483 aa).

ADP-alpha-D-glucose is bound at residue K15.

The protein belongs to the glycosyltransferase 1 family. Bacterial/plant glycogen synthase subfamily.

It catalyses the reaction [(1-&gt;4)-alpha-D-glucosyl](n) + ADP-alpha-D-glucose = [(1-&gt;4)-alpha-D-glucosyl](n+1) + ADP + H(+). Its pathway is glycan biosynthesis; glycogen biosynthesis. Functionally, synthesizes alpha-1,4-glucan chains using ADP-glucose. In Alkalilimnicola ehrlichii (strain ATCC BAA-1101 / DSM 17681 / MLHE-1), this protein is Glycogen synthase.